The primary structure comprises 227 residues: Ribonuclease 3 (227 aa).

Residues 4–126 (LDRLERKIGY…IIGAMSLDQG (123 aa)) form the RNase III domain. Glutamate 39 lines the Mg(2+) pocket. Aspartate 43 is an active-site residue. Residues aspartate 112 and glutamate 115 each coordinate Mg(2+). Residue glutamate 115 is part of the active site. One can recognise a DRBM domain in the interval 153–226 (DAKTRLQEYL…AEQILKELDI (74 aa)).

This sequence belongs to the ribonuclease III family. As to quaternary structure, homodimer. The cofactor is Mg(2+).

It is found in the cytoplasm. It carries out the reaction Endonucleolytic cleavage to 5'-phosphomonoester.. Functionally, digests double-stranded RNA. Involved in the processing of primary rRNA transcript to yield the immediate precursors to the large and small rRNAs (23S and 16S). Processes some mRNAs, and tRNAs when they are encoded in the rRNA operon. Processes pre-crRNA and tracrRNA of type II CRISPR loci if present in the organism. This Haemophilus influenzae (strain ATCC 51907 / DSM 11121 / KW20 / Rd) protein is Ribonuclease 3.